Consider the following 133-residue polypeptide: Nickel-responsive regulator (133 aa).

Ni(2+) is bound by residues histidine 76, histidine 87, histidine 89, and cysteine 95.

The protein belongs to the transcriptional regulatory CopG/NikR family. Homotetramer. Requires Ni(2+) as cofactor.

Its function is as follows. Transcriptional repressor of the nikABCDE operon. Is active in the presence of excessive concentrations of intracellular nickel. This is Nickel-responsive regulator from Escherichia coli (strain SMS-3-5 / SECEC).